We begin with the raw amino-acid sequence, 120 residues long: Small ribosomal subunit protein eS17 (120 aa).

This sequence belongs to the eukaryotic ribosomal protein eS17 family. As to quaternary structure, component of the small ribosomal subunit.

Its subcellular location is the cytoplasm. This is Small ribosomal subunit protein eS17 (RPS17) from Encephalitozoon cuniculi (strain GB-M1) (Microsporidian parasite).